The sequence spans 426 residues: Tryptophan--tRNA ligase (426 aa).

Positions 66–74 (PSGEMHLGN) match the 'HIGH' region motif. The short motif at 314–318 (KMSSS) is the 'KMSKS' region element.

The protein belongs to the class-I aminoacyl-tRNA synthetase family.

The protein localises to the cytoplasm. It catalyses the reaction tRNA(Trp) + L-tryptophan + ATP = L-tryptophyl-tRNA(Trp) + AMP + diphosphate + H(+). This is Tryptophan--tRNA ligase from Thermoplasma acidophilum (strain ATCC 25905 / DSM 1728 / JCM 9062 / NBRC 15155 / AMRC-C165).